The following is a 111-amino-acid chain: Vacuolar ATPase assembly integral membrane protein VMA21 (111 aa).

Topologically, residues 1–39 (MATRRIVATEKSILEKDDHIGSSPAAGEKSNITPAVPLD) are cytoplasmic. A helical transmembrane segment spans residues 40-60 (VILKLLAFTLAMVVIPIGSYF). Topologically, residues 61 to 73 (VTVNSIFKGNSTY) are lumenal. Residues 74–94 (AGALAAIMANVVLVAYVVVAM) traverse the membrane as a helical segment. The Cytoplasmic segment spans residues 95 to 111 (NEDQTEQEKAKEGKKDR). Residues 108–111 (KKDR) carry the Prevents secretion from ER motif.

Belongs to the VMA21 family.

It is found in the endoplasmic reticulum membrane. Its subcellular location is the endoplasmic reticulum-Golgi intermediate compartment membrane. The protein localises to the cytoplasmic vesicle. The protein resides in the COPII-coated vesicle membrane. Its function is as follows. Required for the assembly of the V0 complex of the vacuolar ATPase (V-ATPase) in the endoplasmic reticulum. This Pyricularia oryzae (strain 70-15 / ATCC MYA-4617 / FGSC 8958) (Rice blast fungus) protein is Vacuolar ATPase assembly integral membrane protein VMA21.